The primary structure comprises 179 residues: MSRIGKAEIKLPDKVEVKQENANIKVKGPLGELFTPIFEGISVKTENGIVKLERSNEDQKVVALHGLTRALLMNCVKGVSQGWEKNLEITGVGYRAQKRGEDLVMSLGFSHEVVYKAPKGIKIDVQEQLKIKVSGIDKQLVGQVAADIRSKRPPEPYKGKGIKYAEEFIKKKAGKTGKK.

This sequence belongs to the universal ribosomal protein uL6 family. As to quaternary structure, part of the 50S ribosomal subunit.

Its function is as follows. This protein binds to the 23S rRNA, and is important in its secondary structure. It is located near the subunit interface in the base of the L7/L12 stalk, and near the tRNA binding site of the peptidyltransferase center. The polypeptide is Large ribosomal subunit protein uL6 (Leptospira interrogans serogroup Icterohaemorrhagiae serovar copenhageni (strain Fiocruz L1-130)).